Here is a 218-residue protein sequence, read N- to C-terminus: Large ribosomal subunit protein uL3 (218 aa).

Residues 127–167 (GFSRGPMSHGSKNHRLPGSIGAGTTPGRVYPGKRMAGRMGG) are disordered.

Belongs to the universal ribosomal protein uL3 family. Part of the 50S ribosomal subunit. Forms a cluster with proteins L14 and L19.

Functionally, one of the primary rRNA binding proteins, it binds directly near the 3'-end of the 23S rRNA, where it nucleates assembly of the 50S subunit. This Prochlorococcus marinus (strain NATL1A) protein is Large ribosomal subunit protein uL3.